Here is a 287-residue protein sequence, read N- to C-terminus: Elongation factor Ts (287 aa).

Residues threonine 81–valine 84 form an involved in Mg(2+) ion dislocation from EF-Tu region.

Belongs to the EF-Ts family.

It localises to the cytoplasm. Its function is as follows. Associates with the EF-Tu.GDP complex and induces the exchange of GDP to GTP. It remains bound to the aminoacyl-tRNA.EF-Tu.GTP complex up to the GTP hydrolysis stage on the ribosome. This is Elongation factor Ts from Nitratidesulfovibrio vulgaris (strain ATCC 29579 / DSM 644 / CCUG 34227 / NCIMB 8303 / VKM B-1760 / Hildenborough) (Desulfovibrio vulgaris).